A 198-amino-acid polypeptide reads, in one-letter code: Peptidyl-tRNA hydrolase (198 aa).

Tyrosine 14 serves as a coordination point for tRNA. Histidine 19 (proton acceptor) is an active-site residue. TRNA is bound by residues tyrosine 64, asparagine 66, and asparagine 113.

Belongs to the PTH family. In terms of assembly, monomer.

The protein resides in the cytoplasm. The catalysed reaction is an N-acyl-L-alpha-aminoacyl-tRNA + H2O = an N-acyl-L-amino acid + a tRNA + H(+). Its function is as follows. Hydrolyzes ribosome-free peptidyl-tRNAs (with 1 or more amino acids incorporated), which drop off the ribosome during protein synthesis, or as a result of ribosome stalling. In terms of biological role, catalyzes the release of premature peptidyl moieties from peptidyl-tRNA molecules trapped in stalled 50S ribosomal subunits, and thus maintains levels of free tRNAs and 50S ribosomes. This is Peptidyl-tRNA hydrolase from Acidobacterium capsulatum (strain ATCC 51196 / DSM 11244 / BCRC 80197 / JCM 7670 / NBRC 15755 / NCIMB 13165 / 161).